A 201-amino-acid chain; its full sequence is Testis-expressed protein 38 (201 aa).

A helical transmembrane segment spans residues 3-23 (ISLCIGFLGLCSVLIGSCILF).

It localises to the membrane. The polypeptide is Testis-expressed protein 38 (Tex38) (Mus musculus (Mouse)).